The following is a 935-amino-acid chain: Formin-I (935 aa).

The stretch at 35–76 (QQQQQQQQQQINNENENSINNQENKENNNKDNNNNNNKEIKQ) forms a coiled coil. Disordered regions lie at residues 52–78 (SINN…KQSS), 380–511 (LSSA…QLTP), and 561–590 (KEKM…QSLS). Positions 384–407 (KKQPQQQPQKDVTSSSSSSSNSSS) are enriched in low complexity. The span at 418–428 (ITTNDSSSSNP) shows a compositional bias: polar residues. The span at 431–443 (DFDKLSLSSDDKV) shows a compositional bias: basic and acidic residues. A compositionally biased stretch (polar residues) spans 444–454 (NNNNVQIENTT). Residues 444-505 (NNNNVQIENT…KPNNSGGGGG (62 aa)) form the FH1 domain. The span at 456–482 (SVPPPPPVGAPPPPPPPPPPPPPPPPS) shows a compositional bias: pro residues. Positions 484–499 (LKLNRNRISTPKKPNN) are enriched in polar residues. In terms of domain architecture, FH2 spans 506–935 (GGQLTPLQKK…SLNLSTLNSK (430 aa)). Residues 568 to 583 (NLNNSNNNNNNNSNNN) show a composition bias toward low complexity. Coiled-coil stretches lie at residues 702 to 730 (SLLD…FIKV) and 803 to 834 (QSSL…QQLL).

Belongs to the formin homology family. Diaphanous subfamily.

Formins play an important role in the nucleation of actin and the formation of linear actin filaments. The protein is Formin-I (forI) of Dictyostelium discoideum (Social amoeba).